The primary structure comprises 393 residues: Leucine aminopeptidase 1 (393 aa).

Residues 1 to 18 (MKLSQVSALAACVPAATA) form the signal peptide. The propeptide occupies 19-84 (RFVELMEADH…GSQGLRIKES (66 aa)). A glycan (N-linked (GlcNAc...) asparagine) is linked at Asn176. Positions 184, 202, 241, and 268 each coordinate Zn(2+). The cysteines at positions 317 and 321 are disulfide-linked. His350 is a binding site for Zn(2+).

The protein belongs to the peptidase M28 family. M28E subfamily. Monomer. The cofactor is Zn(2+).

It is found in the secreted. Its function is as follows. Extracellular aminopeptidase that allows assimilation of proteinaceous substrates. This Metarhizium robertsii (strain ARSEF 23 / ATCC MYA-3075) (Metarhizium anisopliae (strain ARSEF 23)) protein is Leucine aminopeptidase 1 (LAP1).